Consider the following 456-residue polypeptide: Methylenetetrahydrofolate--tRNA-(uracil-5-)-methyltransferase TrmFO (456 aa).

7–12 (GAGLAG) serves as a coordination point for FAD.

It belongs to the MnmG family. TrmFO subfamily. It depends on FAD as a cofactor.

The protein localises to the cytoplasm. It catalyses the reaction uridine(54) in tRNA + (6R)-5,10-methylene-5,6,7,8-tetrahydrofolate + NADH + H(+) = 5-methyluridine(54) in tRNA + (6S)-5,6,7,8-tetrahydrofolate + NAD(+). It carries out the reaction uridine(54) in tRNA + (6R)-5,10-methylene-5,6,7,8-tetrahydrofolate + NADPH + H(+) = 5-methyluridine(54) in tRNA + (6S)-5,6,7,8-tetrahydrofolate + NADP(+). Functionally, catalyzes the folate-dependent formation of 5-methyl-uridine at position 54 (M-5-U54) in all tRNAs. This Synechococcus sp. (strain RCC307) protein is Methylenetetrahydrofolate--tRNA-(uracil-5-)-methyltransferase TrmFO.